A 423-amino-acid polypeptide reads, in one-letter code: AP-1 complex subunit mu-1 (423 aa).

Residue Ser2 is modified to N-acetylserine. Residues Thr152, Thr154, and Thr223 each carry the phosphothreonine modification. Positions 168–421 (KNEVFLDVIE…ITQNGDYQLR (254 aa)) constitute an MHD domain.

The protein belongs to the adaptor complexes medium subunit family. In terms of assembly, adaptor protein complex 1 (AP-1) is a heterotetramer composed of two large adaptins (gamma-type subunit AP1G1 and beta-type subunit AP1B1), a medium adaptin (mu-type subunit AP1M1 or AP1M2) and a small adaptin (sigma-type subunit AP1S1 or AP1S2 or AP1S3). Interacts with MARCHF11. Phosphorylation of membrane-bound AP1M1/AP1M2 increases its affinity for sorting signals.

It is found in the cytoplasmic vesicle. Its subcellular location is the clathrin-coated vesicle membrane. It localises to the golgi apparatus. Subunit of clathrin-associated adaptor protein complex 1 that plays a role in protein sorting in the trans-Golgi network (TGN) and endosomes. The AP complexes mediate the recruitment of clathrin to membranes and the recognition of sorting signals within the cytosolic tails of transmembrane cargo molecules. This chain is AP-1 complex subunit mu-1, found in Bos taurus (Bovine).